We begin with the raw amino-acid sequence, 335 residues long: Phosphate acyltransferase (335 aa).

Belongs to the PlsX family. As to quaternary structure, homodimer. Probably interacts with PlsY.

It localises to the cytoplasm. The catalysed reaction is a fatty acyl-[ACP] + phosphate = an acyl phosphate + holo-[ACP]. It functions in the pathway lipid metabolism; phospholipid metabolism. Its function is as follows. Catalyzes the reversible formation of acyl-phosphate (acyl-PO(4)) from acyl-[acyl-carrier-protein] (acyl-ACP). This enzyme utilizes acyl-ACP as fatty acyl donor, but not acyl-CoA. This is Phosphate acyltransferase from Desulfitobacterium hafniense (strain Y51).